The chain runs to 240 residues: Glyceraldehyde 3-phosphate phosphatase (240 aa).

The protein belongs to the HAD-like hydrolase superfamily. The cofactor is Mg(2+).

Catalyzes the dephosphorylation of D,L-glyceraldehyde 3-phosphate in vitro. The polypeptide is Glyceraldehyde 3-phosphate phosphatase (Pyrococcus furiosus (strain ATCC 43587 / DSM 3638 / JCM 8422 / Vc1)).